The sequence spans 64 residues: Large ribosomal subunit protein bL32 (64 aa).

Residues 1 to 28 (MAVQKSRVTPSRRGQRRSHDALTAKKLS) form a disordered region.

Belongs to the bacterial ribosomal protein bL32 family.

The protein is Large ribosomal subunit protein bL32 (rpmF) of Xylella fastidiosa (strain 9a5c).